Here is a 204-residue protein sequence, read N- to C-terminus: Imidazoleglycerol-phosphate dehydratase (204 aa).

Belongs to the imidazoleglycerol-phosphate dehydratase family.

The protein localises to the cytoplasm. The enzyme catalyses D-erythro-1-(imidazol-4-yl)glycerol 3-phosphate = 3-(imidazol-4-yl)-2-oxopropyl phosphate + H2O. It functions in the pathway amino-acid biosynthesis; L-histidine biosynthesis; L-histidine from 5-phospho-alpha-D-ribose 1-diphosphate: step 6/9. The chain is Imidazoleglycerol-phosphate dehydratase from Rhodococcus opacus (strain B4).